The following is a 197-amino-acid chain: Imidazoleglycerol-phosphate dehydratase (197 aa).

Belongs to the imidazoleglycerol-phosphate dehydratase family.

The protein localises to the cytoplasm. The catalysed reaction is D-erythro-1-(imidazol-4-yl)glycerol 3-phosphate = 3-(imidazol-4-yl)-2-oxopropyl phosphate + H2O. It functions in the pathway amino-acid biosynthesis; L-histidine biosynthesis; L-histidine from 5-phospho-alpha-D-ribose 1-diphosphate: step 6/9. This is Imidazoleglycerol-phosphate dehydratase from Bradyrhizobium sp. (strain ORS 278).